The primary structure comprises 224 residues: MHINNWPTHERPREKLLAHGAATLSDAELLAIFLGSGLRGHDAVQTARNLLHTHGPLRELLDRPPGDLMRLPGLGLARACKLTAALELSTRHLAAALQRGASIHDPISAGRYFAQRLRANPNEVFAVLFLDNRHRAISFEELFHGTINGAEVHPREVVRRALTLNAAAVIVGHNHPSGNREPSPADQMITQRLKNALDLIDVRLVDHFVIGDGAPVSFAEHGWL.

Residues 102 to 224 (SIHDPISAGR…PVSFAEHGWL (123 aa)) form the MPN domain. Residues His173, His175, and Asp186 each contribute to the Zn(2+) site. The short motif at 173–186 (HNHPSGNREPSPAD) is the JAMM motif element.

It belongs to the UPF0758 family.

The protein is UPF0758 protein PD_0117 of Xylella fastidiosa (strain Temecula1 / ATCC 700964).